The primary structure comprises 225 residues: Leucyl/phenylalanyl-tRNA--protein transferase (225 aa).

This sequence belongs to the L/F-transferase family.

The protein localises to the cytoplasm. It carries out the reaction N-terminal L-lysyl-[protein] + L-leucyl-tRNA(Leu) = N-terminal L-leucyl-L-lysyl-[protein] + tRNA(Leu) + H(+). The enzyme catalyses N-terminal L-arginyl-[protein] + L-leucyl-tRNA(Leu) = N-terminal L-leucyl-L-arginyl-[protein] + tRNA(Leu) + H(+). It catalyses the reaction L-phenylalanyl-tRNA(Phe) + an N-terminal L-alpha-aminoacyl-[protein] = an N-terminal L-phenylalanyl-L-alpha-aminoacyl-[protein] + tRNA(Phe). Functions in the N-end rule pathway of protein degradation where it conjugates Leu, Phe and, less efficiently, Met from aminoacyl-tRNAs to the N-termini of proteins containing an N-terminal arginine or lysine. This is Leucyl/phenylalanyl-tRNA--protein transferase from Gluconobacter oxydans (strain 621H) (Gluconobacter suboxydans).